Consider the following 480-residue polypeptide: Alpha,alpha-trehalose-phosphate synthase [UDP-forming] 2 (480 aa).

Positions 97 and 151 each coordinate D-glucose 6-phosphate. UDP is bound by residues arginine 288 and lysine 293. Residues arginine 288 and lysine 293 each coordinate UDP-alpha-D-glucose. Arginine 326 lines the D-glucose 6-phosphate pocket. 387-395 (DGMNLVSFE) is a binding site for UDP-alpha-D-glucose. 391-395 (LVSFE) contacts UDP.

Belongs to the glycosyltransferase 20 family.

It carries out the reaction D-glucose 6-phosphate + UDP-alpha-D-glucose = alpha,alpha-trehalose 6-phosphate + UDP + H(+). It participates in carbohydrate biosynthesis. Functionally, synthase catalytic subunit of the trehalose synthase complex that catalyzes the production of trehalose from glucose-6-phosphate and UDP-alpha-D-glucose in a two step process. The polypeptide is Alpha,alpha-trehalose-phosphate synthase [UDP-forming] 2 (Aspergillus niger).